The chain runs to 394 residues: NAD(P)H-quinone oxidoreductase subunit H (394 aa).

Belongs to the complex I 49 kDa subunit family. As to quaternary structure, NDH-1 can be composed of about 15 different subunits; different subcomplexes with different compositions have been identified which probably have different functions.

It is found in the cellular thylakoid membrane. It catalyses the reaction a plastoquinone + NADH + (n+1) H(+)(in) = a plastoquinol + NAD(+) + n H(+)(out). The catalysed reaction is a plastoquinone + NADPH + (n+1) H(+)(in) = a plastoquinol + NADP(+) + n H(+)(out). In terms of biological role, NDH-1 shuttles electrons from an unknown electron donor, via FMN and iron-sulfur (Fe-S) centers, to quinones in the respiratory and/or the photosynthetic chain. The immediate electron acceptor for the enzyme in this species is believed to be plastoquinone. Couples the redox reaction to proton translocation, and thus conserves the redox energy in a proton gradient. Cyanobacterial NDH-1 also plays a role in inorganic carbon-concentration. This is NAD(P)H-quinone oxidoreductase subunit H from Thermosynechococcus vestitus (strain NIES-2133 / IAM M-273 / BP-1).